A 342-amino-acid chain; its full sequence is Large ribosomal subunit protein uL10 (342 aa).

The required for interaction with ribosomal protein L12 dimers stretch occupies residues 212-342; sequence EYIDMLQKAY…ALAGLSALFG (131 aa). Over residues 299–308 the composition is skewed to polar residues; that stretch reads QAQVAVATQP. Positions 299-342 are disordered; it reads QAQVAVATQPSEEEKKEEEKTEEEEKEEEASEEEALAGLSALFG. Over residues 318 to 333 the composition is skewed to acidic residues; it reads KTEEEEKEEEASEEEA.

Belongs to the universal ribosomal protein uL10 family. Part of the 50S ribosomal subunit, binds large rRNA. Forms the ribosomal stalk which helps the ribosome interact with GTP-bound translation factors. Forms a heptameric L10(L12)2(L12)2(L12)2 complex, where L10 forms an elongated spine to which the L12 dimers bind in a sequential fashion.

Functionally, forms the large subunit's ribosomal stalk, playing a central role in the interaction of the ribosome with elongation factors; the stalk complex of P.horikoshii binds to E.coli large subunits and confers on them the ability to interact with eukaryotic elongation factors. Each succesive L12 dimer bound along the P0 spine increases the GTPase activity of elongation factors and increases translation by reconsituted ribosomes, although the first site is the most stimulatory. This chain is Large ribosomal subunit protein uL10, found in Pyrococcus horikoshii (strain ATCC 700860 / DSM 12428 / JCM 9974 / NBRC 100139 / OT-3).